Here is a 323-residue protein sequence, read N- to C-terminus: Cysteine synthase A (323 aa).

Asn-8 and Arg-35 together coordinate hydrogen sulfide. Lys-42 is modified (N6-(pyridoxal phosphate)lysine). Residues Asn-72 and 177-181 (GTGGT) each bind pyridoxal 5'-phosphate. Residue Leu-269 coordinates hydrogen sulfide. Ser-273 is a binding site for pyridoxal 5'-phosphate.

Belongs to the cysteine synthase/cystathionine beta-synthase family. As to quaternary structure, homodimer. The cofactor is pyridoxal 5'-phosphate.

It carries out the reaction O-acetyl-L-serine + hydrogen sulfide = L-cysteine + acetate. It functions in the pathway amino-acid biosynthesis; L-cysteine biosynthesis; L-cysteine from L-serine: step 2/2. Two cysteine synthase enzymes are found. Both catalyze the same reaction. Cysteine synthase B can also use thiosulfate in place of sulfide to give cysteine thiosulfonate as a product. The protein is Cysteine synthase A (cysK) of Salmonella typhi.